We begin with the raw amino-acid sequence, 675 residues long: Protein PALS1 (675 aa).

The segment at 1 to 345 is required for the correct localization of PALS1 and PATJ at cell-cell contacts and the normal formation of tight junctions and adherens junctions; the sequence is MTTSYMNGHV…QQIKPPPAKE (345 aa). 2 positions are modified to phosphoserine: serine 14 and serine 25. Positions 21 to 140 are interaction with PARD6B; it reads LDLASPEEYP…LKHIQHTLVD (120 aa). Residues 51–79 form a disordered region; the sequence is RRSAQLERIRQQQEDMRRRREEEGKKQEL. The segment covering 54 to 79 has biased composition (basic and acidic residues); sequence AQLERIRQQQEDMRRRREEEGKKQEL. Serine 83 and serine 84 each carry phosphoserine. L27 domains follow at residues 120-177 and 179-235; these read NILD…SKAS and PFPL…MQLE. The segment at 181–243 is interaction with LIN7C; sequence PLIANVQDLV…LEPITDERVY (63 aa). One can recognise a PDZ domain in the interval 256–336; sequence IVRIEKARDI…TLTFVLIPSQ (81 aa). The SH3 domain maps to 345–417; sequence ETVIHVKAHF…PGKSFQQQRE (73 aa). The Guanylate kinase-like domain maps to 479 to 660; it reads KRPIILIGPQ…AYQELLRLIN (182 aa). 486 to 493 serves as a coordination point for ATP; the sequence is GPQNCGQN.

The protein belongs to the MAGUK family. As to quaternary structure, heterodimer with MPP1. Forms a heterotrimeric complex composed of PALS1, LIN7B and PATJ; the N-terminal L27 domain of PALS1 interacts with the L27 domain of PATJ and the C-terminal L27 domain of PALS1 interacts with the L27 domain of LIN7B. Component of a complex composed of PALS1, CRB1 and MPP4. Component of a complex whose core is composed of ARHGAP17, AMOT, PALS1, PATJ and PARD3/PAR3. Component of a complex composed of PALS1, CRB1 and EPB41L5. Within the complex, interacts (via HOOK domain) with EPB41L5 (via FERM domain), and interacts with CRB1 (via intracellular domain). Component of a complex composed of PALS1, MPP3 and CRB1; PALS1 acts as a bridging protein between MPP3 (via guanylate kinase-like domain) and CRB1. Component of a complex composed of CRB3, PALS1 and PATJ. As part of the Crumbs complex; interacts with WWP1, the interaction is enhanced by AMOTL2 and facilitates WWP1 localization to the plasma membrane. The Crumbs complex promotes monoubiquitination of AMOTL2 by WWP1, which activates the Hippo signaling pathway. Interacts (via PDZ domain) with PATJ (via N-terminus). Interacts with EZR. Interacts (via PDZ domain) with CRB1 (via C-terminal ERLI motif). While the PDZ domain is sufficient for interaction with CRB1, the adjacent SH3 and guanylate kinase-like domains are likely to contribute to a high affinity interaction. Interacts with WWTR1/TAZ (via WW domain). Interacts with MPP7. Interacts (via PDZ domain) with CRB3 (via C-terminus). Interacts with LIN7C. Interacts with MPDZ. Interacts with PARD6B. Interacts with SC6A1. Interacts with CDH5; the interaction promotes PALS1 localization to cell junctions and is required for CDH5-mediated vascular lumen formation and endothelial cell. Interacts with NPHP1 (via coiled coil and SH3 domains). Interacts with NPHP4. Interacts with CRB2. Expressed in the retinal pigment epithelium (at protein level). Expressed in the vascular plexus of the retina (at protein level). In the brain, expressed in the dentate gyrus of hippocampus, striatum and cerebellum (at protein level). Expressed in the sciatic nerve (at protein level). Expressed in the kidney nephron (at protein level). Expressed in the lung, and heart. Expressed in placenta, brain, skeletal muscles, pancreas and liver.

Its subcellular location is the golgi apparatus. The protein resides in the cell membrane. It localises to the endomembrane system. It is found in the cell junction. The protein localises to the tight junction. Its subcellular location is the adherens junction. The protein resides in the cell projection. It localises to the axon. It is found in the perikaryon. The protein localises to the apical cell membrane. Its function is as follows. Plays a role in tight junction biogenesis and in the establishment of cell polarity in epithelial cells. Also involved in adherens junction biogenesis by ensuring correct localization of the exocyst complex protein EXOC4/SEC8 which allows trafficking of adherens junction structural component CDH1 to the cell surface. Plays a role through its interaction with CDH5 in vascular lumen formation and endothelial membrane polarity. Required during embryonic and postnatal retinal development. Required for the maintenance of cerebellar progenitor cells in an undifferentiated proliferative state, preventing premature differentiation, and is required for cerebellar histogenesis, fissure formation, cerebellar layer organization and cortical development. Plays a role in neuronal progenitor cell survival, potentially via promotion of mTOR signaling. Plays a role in the radial and longitudinal extension of the myelin sheath in Schwann cells. May modulate SC6A1/GAT1-mediated GABA uptake by stabilizing the transporter. May play a role in the T-cell receptor-mediated activation of NF-kappa-B. Required for localization of EZR to the apical membrane of parietal cells and may play a role in the dynamic remodeling of the apical cytoskeleton. Required for the normal polarized localization of the vesicular marker STX4. Required for the correct trafficking of the myelin proteins PMP22 and MAG. Involved in promoting phosphorylation and cytoplasmic retention of transcriptional coactivators YAP1 and WWTR1/TAZ which leads to suppression of TGFB1-dependent transcription of target genes such as CCN2/CTGF, SERPINE1/PAI1, SNAI1/SNAIL1 and SMAD7. This chain is Protein PALS1, found in Mus musculus (Mouse).